The chain runs to 194 residues: Imidazoleglycerol-phosphate dehydratase (194 aa).

Belongs to the imidazoleglycerol-phosphate dehydratase family.

The protein localises to the cytoplasm. The catalysed reaction is D-erythro-1-(imidazol-4-yl)glycerol 3-phosphate = 3-(imidazol-4-yl)-2-oxopropyl phosphate + H2O. It participates in amino-acid biosynthesis; L-histidine biosynthesis; L-histidine from 5-phospho-alpha-D-ribose 1-diphosphate: step 6/9. The protein is Imidazoleglycerol-phosphate dehydratase of Limosilactobacillus fermentum (strain NBRC 3956 / LMG 18251) (Lactobacillus fermentum).